A 354-amino-acid chain; its full sequence is UDP-3-O-acylglucosamine N-acyltransferase (354 aa).

His247 serves as the catalytic Proton acceptor.

The protein belongs to the transferase hexapeptide repeat family. LpxD subfamily. In terms of assembly, homotrimer.

It carries out the reaction a UDP-3-O-[(3R)-3-hydroxyacyl]-alpha-D-glucosamine + a (3R)-hydroxyacyl-[ACP] = a UDP-2-N,3-O-bis[(3R)-3-hydroxyacyl]-alpha-D-glucosamine + holo-[ACP] + H(+). Its pathway is bacterial outer membrane biogenesis; LPS lipid A biosynthesis. Its function is as follows. Catalyzes the N-acylation of UDP-3-O-acylglucosamine using 3-hydroxyacyl-ACP as the acyl donor. Is involved in the biosynthesis of lipid A, a phosphorylated glycolipid that anchors the lipopolysaccharide to the outer membrane of the cell. The polypeptide is UDP-3-O-acylglucosamine N-acyltransferase (Chlamydia trachomatis serovar L2 (strain ATCC VR-902B / DSM 19102 / 434/Bu)).